Consider the following 153-residue polypeptide: SsrA-binding protein (153 aa).

The protein belongs to the SmpB family.

It localises to the cytoplasm. Required for rescue of stalled ribosomes mediated by trans-translation. Binds to transfer-messenger RNA (tmRNA), required for stable association of tmRNA with ribosomes. tmRNA and SmpB together mimic tRNA shape, replacing the anticodon stem-loop with SmpB. tmRNA is encoded by the ssrA gene; the 2 termini fold to resemble tRNA(Ala) and it encodes a 'tag peptide', a short internal open reading frame. During trans-translation Ala-aminoacylated tmRNA acts like a tRNA, entering the A-site of stalled ribosomes, displacing the stalled mRNA. The ribosome then switches to translate the ORF on the tmRNA; the nascent peptide is terminated with the 'tag peptide' encoded by the tmRNA and targeted for degradation. The ribosome is freed to recommence translation, which seems to be the essential function of trans-translation. The sequence is that of SsrA-binding protein from Orientia tsutsugamushi (strain Boryong) (Rickettsia tsutsugamushi).